The following is a 148-amino-acid chain: Large ribosomal subunit protein bL9 (148 aa).

The protein belongs to the bacterial ribosomal protein bL9 family.

Its function is as follows. Binds to the 23S rRNA. This Coprothermobacter proteolyticus (strain ATCC 35245 / DSM 5265 / OCM 4 / BT) protein is Large ribosomal subunit protein bL9.